We begin with the raw amino-acid sequence, 425 residues long: Histone-binding protein RBBP7 (425 aa).

7 WD repeats span residues 47–122 (QWLP…KINH), 128–173 (RARY…LRLR), 181–217 (GLSWNSNLSGHLLSASDDHTVCLWDISAGPKEGKVVD), 228–269 (VVED…HSVD), 275–312 (VNCLSFNPYSEFILATGSADKTVALWDLRNLKLKLHSF), 318–369 (EIFQ…LFIH), and 376–403 (ISDFSWNPNEPWVICSVSEDNIMQIWQM).

It belongs to the WD repeat RBAP46/RBAP48/MSI1 family. Binds directly to helix 1 of the histone fold of histone H4, a region that is not accessible when H4 is in chromatin.

Its subcellular location is the nucleus. Its function is as follows. Core histone-binding subunit that may target chromatin remodeling factors, histone acetyltransferases and histone deacetylases to their histone substrates in a manner that is regulated by nucleosomal DNA. Component of several complexes which regulate chromatin metabolism. The sequence is that of Histone-binding protein RBBP7 (rbbp7) from Xenopus tropicalis (Western clawed frog).